We begin with the raw amino-acid sequence, 250 residues long: Endomucin (250 aa).

Residues 1–20 (MRLLQVTALFFLLSNSLCRG) form the signal peptide. 2 stretches are compositionally biased toward low complexity: residues 24-38 (KALTETSTTKASATT) and 45-60 (TNKSTGGTPPKGTTNS). 2 disordered regions span residues 24 to 83 (KALT…ETTT) and 105 to 153 (NAVS…LTTA). 3 N-linked (GlcNAc...) asparagine glycosylation sites follow: Asn-46, Asn-115, and Asn-119. Polar residues-rich tracts occupy residues 105 to 135 (NAVSTLSSPQNKTENQSSIRTTEISGTNQLP) and 143 to 153 (TETPSASLTTA). Residues 180 to 200 (VILPVVIALIVITVLVFTLVG) traverse the membrane as a helical segment. Positions 210-250 (PGTPESGNDQPQSDKESVKLLTVKTISHESGEHSAQGKAKN) are disordered. The residue at position 226 (Ser-226) is a Phosphoserine.

Highly O-glycosylated. Sialic acid-rich glycoprotein.

It localises to the membrane. Its function is as follows. Endothelial sialomucin, also called endomucin or mucin-like sialoglycoprotein, which interferes with the assembly of focal adhesion complexes and inhibits interaction between cells and the extracellular matrix. The protein is Endomucin (Emcn) of Rattus norvegicus (Rat).